Reading from the N-terminus, the 500-residue chain is Galactofuranose transporter ATP-binding protein YtfR (500 aa).

ABC transporter domains follow at residues 10-245 and 259-497; these read LRTE…LGRE and LSDK…IMNA. 42-49 is an ATP binding site; it reads GENGAGKS.

The protein belongs to the ABC transporter superfamily. As to quaternary structure, the complex is composed of two ATP-binding proteins (YtfR), two transmembrane proteins (YtfT and YjfF) and a solute-binding protein (YtfQ).

Its subcellular location is the cell inner membrane. It catalyses the reaction D-galactofuranose(out) + ATP + H2O = D-galactofuranose(in) + ADP + phosphate + H(+). Its function is as follows. Part of the ABC transporter complex YtfQRT-YjfF involved in galactofuranose transport. Responsible for energy coupling to the transport system. The polypeptide is Galactofuranose transporter ATP-binding protein YtfR (ytfR) (Escherichia coli (strain K12)).